The sequence spans 153 residues: Protein SprT-like (153 aa).

The SprT-like domain maps to 7 to 145; it reads QTLVEKISIV…VCGKCHGRLS (139 aa). Histidine 67 serves as a coordination point for Zn(2+). Residue glutamate 68 is part of the active site. Residue histidine 71 participates in Zn(2+) binding.

The protein belongs to the SprT family. The cofactor is Zn(2+).

It is found in the cytoplasm. The protein is Protein SprT-like of Enterococcus faecalis (strain ATCC 700802 / V583).